The sequence spans 499 residues: UDP-N-acetylmuramoyl-L-alanyl-D-glutamate--2,6-diaminopimelate ligase (499 aa).

Residues Leu-30 and Ser-32 each contribute to the UDP-N-acetyl-alpha-D-muramoyl-L-alanyl-D-glutamate site. 122-128 (GTNGKTT) lines the ATP pocket. UDP-N-acetyl-alpha-D-muramoyl-L-alanyl-D-glutamate contacts are provided by residues 164–165 (TT), Ser-191, Gln-197, and Arg-199. Lys-231 carries the N6-carboxylysine modification. Meso-2,6-diaminopimelate contacts are provided by residues Arg-397, 421–424 (DNPR), Gly-472, and Glu-476. The Meso-diaminopimelate recognition motif motif lies at 421–424 (DNPR).

It belongs to the MurCDEF family. MurE subfamily. The cofactor is Mg(2+). In terms of processing, carboxylation is probably crucial for Mg(2+) binding and, consequently, for the gamma-phosphate positioning of ATP.

Its subcellular location is the cytoplasm. It catalyses the reaction UDP-N-acetyl-alpha-D-muramoyl-L-alanyl-D-glutamate + meso-2,6-diaminopimelate + ATP = UDP-N-acetyl-alpha-D-muramoyl-L-alanyl-gamma-D-glutamyl-meso-2,6-diaminopimelate + ADP + phosphate + H(+). It functions in the pathway cell wall biogenesis; peptidoglycan biosynthesis. In terms of biological role, catalyzes the addition of meso-diaminopimelic acid to the nucleotide precursor UDP-N-acetylmuramoyl-L-alanyl-D-glutamate (UMAG) in the biosynthesis of bacterial cell-wall peptidoglycan. The chain is UDP-N-acetylmuramoyl-L-alanyl-D-glutamate--2,6-diaminopimelate ligase from Blochmanniella floridana.